Here is a 312-residue protein sequence, read N- to C-terminus: Mevalonate kinase (312 aa).

104–114 (PISCGLGSSAS) is an ATP binding site. The active-site Proton acceptor is Asp-155.

It belongs to the GHMP kinase family. Mevalonate kinase subfamily. As to quaternary structure, homodimer. Mg(2+) is required as a cofactor.

It is found in the cytoplasm. It carries out the reaction (R)-mevalonate + ATP = (R)-5-phosphomevalonate + ADP + H(+). Its pathway is isoprenoid biosynthesis; isopentenyl diphosphate biosynthesis via mevalonate pathway; isopentenyl diphosphate from (R)-mevalonate: step 1/3. With respect to regulation, farnesyl- and geranyl-pyrophosphates are competitive inhibitors. Slightly inhibited by high concentration of ATP. Functionally, catalyzes the phosphorylation of (R)-mevalonate (MVA) to (R)-mevalonate 5-phosphate (MVAP). Functions in the mevalonate (MVA) pathway leading to isopentenyl diphosphate (IPP), a key precursor for the biosynthesis of isoprenoid compounds such as archaeal membrane lipids. This is Mevalonate kinase from Methanocaldococcus jannaschii (strain ATCC 43067 / DSM 2661 / JAL-1 / JCM 10045 / NBRC 100440) (Methanococcus jannaschii).